Here is a 401-residue protein sequence, read N- to C-terminus: Imidazolonepropionase (401 aa).

Histidine 70 and histidine 72 together coordinate Fe(3+). Zn(2+) contacts are provided by histidine 70 and histidine 72. Positions 79, 142, and 175 each coordinate 4-imidazolone-5-propanoate. Tyrosine 142 provides a ligand contact to N-formimidoyl-L-glutamate. Histidine 240 is a binding site for Fe(3+). Zn(2+) is bound at residue histidine 240. Glutamine 243 lines the 4-imidazolone-5-propanoate pocket. Aspartate 315 provides a ligand contact to Fe(3+). Residue aspartate 315 participates in Zn(2+) binding. N-formimidoyl-L-glutamate-binding residues include asparagine 317 and glycine 319. Serine 320 contributes to the 4-imidazolone-5-propanoate binding site.

Belongs to the metallo-dependent hydrolases superfamily. HutI family. Zn(2+) is required as a cofactor. The cofactor is Fe(3+).

The protein resides in the cytoplasm. It catalyses the reaction 4-imidazolone-5-propanoate + H2O = N-formimidoyl-L-glutamate. The protein operates within amino-acid degradation; L-histidine degradation into L-glutamate; N-formimidoyl-L-glutamate from L-histidine: step 3/3. Catalyzes the hydrolytic cleavage of the carbon-nitrogen bond in imidazolone-5-propanoate to yield N-formimidoyl-L-glutamate. It is the third step in the universal histidine degradation pathway. This Ruegeria pomeroyi (strain ATCC 700808 / DSM 15171 / DSS-3) (Silicibacter pomeroyi) protein is Imidazolonepropionase.